The sequence spans 183 residues: Small ribosomal subunit protein uS5 (183 aa).

Residues 11–71 (FLERVVGINR…EEAKKSFFRV (61 aa)) form the S5 DRBM domain.

The protein belongs to the universal ribosomal protein uS5 family. Part of the 30S ribosomal subunit. Contacts proteins S4 and S8.

Functionally, with S4 and S12 plays an important role in translational accuracy. Its function is as follows. Located at the back of the 30S subunit body where it stabilizes the conformation of the head with respect to the body. This chain is Small ribosomal subunit protein uS5, found in Micrococcus luteus (Micrococcus lysodeikticus).